The sequence spans 99 residues: MNPANYLYLSVLLFTIGASGVLLRRNAIVMFMCVELMLNAVNLAFVTFARMHGHLDAQMIAFFTMVVAACEVVVGLAIIMTIFRTRKSASVDDANLLKG.

A run of 3 helical transmembrane segments spans residues 3-23 (PANY…GVLL), 28-48 (IVMF…FVTF), and 59-79 (MIAF…LAII).

The protein belongs to the complex I subunit 4L family. As to quaternary structure, NDH-1 is composed of 14 different subunits. Subunits NuoA, H, J, K, L, M, N constitute the membrane sector of the complex.

The protein resides in the cell membrane. The catalysed reaction is a quinone + NADH + 5 H(+)(in) = a quinol + NAD(+) + 4 H(+)(out). Functionally, NDH-1 shuttles electrons from NADH, via FMN and iron-sulfur (Fe-S) centers, to quinones in the respiratory chain. The immediate electron acceptor for the enzyme in this species is believed to be a menaquinone. Couples the redox reaction to proton translocation (for every two electrons transferred, four hydrogen ions are translocated across the cytoplasmic membrane), and thus conserves the redox energy in a proton gradient. This is NADH-quinone oxidoreductase subunit K from Mycobacterium bovis (strain ATCC BAA-935 / AF2122/97).